Here is a 358-residue protein sequence, read N- to C-terminus: Photosystem II protein D1 1 (358 aa).

Helical transmembrane passes span 28 to 45, 117 to 132, and 141 to 155; these read YVGWFGVLMIPCLLAATI, HFLIGISAYMGRQWEL, and WICVAYSAPLSAAFA. Residue histidine 117 participates in chlorophyll a binding. Tyrosine 125 contacts pheophytin a. Positions 169 and 188 each coordinate [CaMn4O5] cluster. The helical transmembrane segment at 196-217 threads the bilayer; that stretch reads FHMLGVAGVFGGSLFSAMHGSL. Histidine 197 lines the chlorophyll a pocket. A quinone-binding positions include histidine 214 and 263–264; that span reads SF. Histidine 214 provides a ligand contact to Fe cation. Histidine 271 is a binding site for Fe cation. Residues 273-287 form a helical membrane-spanning segment; the sequence is FLGAWPVIGIWFTSM. The [CaMn4O5] cluster site is built by histidine 331, glutamate 332, aspartate 341, and alanine 343. Residues 344 to 358 constitute a propeptide that is removed on maturation; it reads AAESTPVALQAPAIG.

Belongs to the reaction center PufL/M/PsbA/D family. PSII is composed of 1 copy each of membrane proteins PsbA, PsbB, PsbC, PsbD, PsbE, PsbF, PsbH, PsbI, PsbJ, PsbK, PsbL, PsbM, PsbT, PsbX, PsbY, PsbZ, Psb30/Ycf12, peripheral proteins PsbO, CyanoQ (PsbQ), PsbU, PsbV and a large number of cofactors. It forms dimeric complexes. The cofactor is The D1/D2 heterodimer binds P680, chlorophylls that are the primary electron donor of PSII, and subsequent electron acceptors. It shares a non-heme iron and each subunit binds pheophytin, quinone, additional chlorophylls, carotenoids and lipids. D1 provides most of the ligands for the Mn4-Ca-O5 cluster of the oxygen-evolving complex (OEC). There is also a Cl(-1) ion associated with D1 and D2, which is required for oxygen evolution. The PSII complex binds additional chlorophylls, carotenoids and specific lipids.. In terms of processing, tyr-160 forms a radical intermediate that is referred to as redox-active TyrZ, YZ or Y-Z. C-terminally processed by CtpA; processing is essential to allow assembly of the oxygen-evolving complex and thus photosynthetic growth.

The protein localises to the cellular thylakoid membrane. It catalyses the reaction 2 a plastoquinone + 4 hnu + 2 H2O = 2 a plastoquinol + O2. Photosystem II (PSII) is a light-driven water:plastoquinone oxidoreductase that uses light energy to abstract electrons from H(2)O, generating O(2) and a proton gradient subsequently used for ATP formation. It consists of a core antenna complex that captures photons, and an electron transfer chain that converts photonic excitation into a charge separation. The D1/D2 (PsbA/PsbD) reaction center heterodimer binds P680, the primary electron donor of PSII as well as several subsequent electron acceptors. This Synechococcus sp. (strain CC9902) protein is Photosystem II protein D1 1.